The sequence spans 165 residues: Protein NKG7 (165 aa).

A run of 4 helical transmembrane segments spans residues 9–29 (LLGG…DFWF), 61–81 (FSIM…LSCF), 92–112 (LVST…MAVY), and 133–153 (FYLG…SLGA).

It belongs to the PMP-22/EMP/MP20 family. As to expression, expressed in activated T-cells, in kidney, liver, lung and pancreas. Not expressed in brain, heart, or skeletal muscle. Expressed at high levels in TCR gamma delta-expressing CTL clones, and in some TCR alpha beta-expressing CTL clones (both CD4+ and CD8+), but is not expressed in other TCR alpha beta-expressing CTL clones and in cell lines representing B-cells, monocytes, and myeloid cells.

It localises to the cell membrane. The protein localises to the cytolytic granule membrane. Its function is as follows. Regulates cytotoxic granule exocytosis in effector lymphocytes, thus acting as a critical mediator of inflammation in a broad range of infectious and non-infectious diseases. Essential for cytotoxic degranulation of natural killer (NK) cells and CD8(+) T-cells and for the activation of CD4(+) T-cells following infection. Plays a critical role in CD8(+) T-cell and NK cell-mediated cytolysis of target cells and contributes to the cytolytic activity via the perforin/granzyme pathway by enhancing exocytosis of LAMP1-carrying lytic granules. Contributes to NK cell-mediated control of cancer metastasis. In Homo sapiens (Human), this protein is Protein NKG7 (NKG7).